We begin with the raw amino-acid sequence, 846 residues long: Neurotactin (846 aa).

The segment at 1-222 (MGELEEKETP…EDASDAPPKR (222 aa)) is disordered. The Cytoplasmic portion of the chain corresponds to 1-324 (MGELEEKETP…LRGYKCSVDD (324 aa)). The span at 11-20 (PTETTAAQQE) shows a compositional bias: low complexity. Positions 23-42 (EEPKETDKMLDKKEDAKEKT) are enriched in basic and acidic residues. Thr28 carries the post-translational modification Phosphothreonine; by PKC. A Phosphothreonine modification is found at Thr42. A Phosphoserine modification is found at Ser44. Thr47 is modified (phosphothreonine). Phosphoserine is present on residues Ser48 and Ser52. The span at 63 to 74 (AEKKIDDAELAK) shows a compositional bias: basic and acidic residues. The residue at position 75 (Ser75) is a Phosphoserine; by PKC. Ser77 is subject to Phosphoserine. Composition is skewed to basic and acidic residues over residues 95–111 (DSAD…EVKP), 141–155 (LLEK…KEAN), 163–178 (GKDE…ERLR), and 185–205 (PSAE…KSEA). Ser103 carries the phosphoserine; by PKC modification. At Ser169 the chain carries Phosphoserine; by PKC. Phosphoserine occurs at positions 186 and 203. Residue Thr206 is modified to Phosphothreonine. Ser256 bears the Phosphoserine mark. Phosphothreonine is present on Thr259. Ser263 carries the post-translational modification Phosphoserine. Thr269 bears the Phosphothreonine mark. The chain crosses the membrane as a helical; Signal-anchor for type II membrane protein span at residues 325–346 (ALIVFGILLFVLLLGVIGYVLT). Residues 347–846 (HETLTSPPLR…DIVPRYARVD (500 aa)) lie on the Extracellular side of the membrane. N-linked (GlcNAc...) asparagine glycosylation is found at Asn410, Asn417, and Asn428. 2 cysteine pairs are disulfide-bonded: Cys422–Cys437 and Cys600–Cys605. 3 N-linked (GlcNAc...) asparagine glycosylation sites follow: Asn636, Asn691, and Asn720. Residues Cys738 and Cys830 are joined by a disulfide bond.

In the C-terminal section; belongs to the type-B carboxylesterase/lipase family. As to expression, late in embryogenesis, expression is restricted to cells of the peripheral and central nervous system undergoing proliferation and differentiation. Also expressed in larval CNS, mesoderm and imaginal disks.

Its subcellular location is the membrane. Functionally, may mediate or modulate cell adhesion between embryonic cells during development. The polypeptide is Neurotactin (Nrt) (Drosophila melanogaster (Fruit fly)).